Consider the following 432-residue polypeptide: Putative transposase A625R (432 aa).

Zn(2+) contacts are provided by cysteine 375, cysteine 378, cysteine 393, and cysteine 395.

This sequence in the N-terminal section; belongs to the transposase 2 family. In the C-terminal section; belongs to the transposase 35 family.

The polypeptide is Putative transposase A625R (Chlorella (PBCV-1)).